The following is a 109-amino-acid chain: Thiosulfate sulfurtransferase GlpE (109 aa).

One can recognise a Rhodanese domain in the interval 16–104 (RAEGAVVVDI…WRSTYPGETA (89 aa)). Catalysis depends on C64, which acts as the Cysteine persulfide intermediate.

This sequence belongs to the GlpE family.

It is found in the cytoplasm. It catalyses the reaction thiosulfate + hydrogen cyanide = thiocyanate + sulfite + 2 H(+). The catalysed reaction is thiosulfate + [thioredoxin]-dithiol = [thioredoxin]-disulfide + hydrogen sulfide + sulfite + 2 H(+). Functionally, transferase that catalyzes the transfer of sulfur from thiosulfate to thiophilic acceptors such as cyanide or dithiols. May function in a CysM-independent thiosulfate assimilation pathway by catalyzing the conversion of thiosulfate to sulfite, which can then be used for L-cysteine biosynthesis. This chain is Thiosulfate sulfurtransferase GlpE, found in Pseudomonas entomophila (strain L48).